The sequence spans 458 residues: Elongation factor 1-alpha (458 aa).

Gly-2 bears the N,N,N-trimethylglycine mark. Position 3 is an N6,N6-dimethyllysine; alternate (Lys-3). An N6-methyllysine; alternate modification is found at Lys-3. Residues 5 to 240 (KTHVNVVVIG…DAIEPPVRPT (236 aa)) enclose the tr-type G domain. Residues 14 to 21 (GHVDSGKS) form a G1 region. 14–21 (GHVDSGKS) is a GTP binding site. The residue at position 30 (Lys-30) is an N6-methyllysine. The segment at 70–74 (GITID) is G2. The residue at position 79 (Lys-79) is an N6,N6,N6-trimethyllysine. Residues 91–94 (DAPG) are G3. GTP-binding positions include 91–95 (DAPGH) and 153–156 (NKMD). The G4 stretch occupies residues 153–156 (NKMD). Residues 192–194 (SGW) are G5. Lys-316 bears the N6,N6-dimethyllysine; alternate mark. Lys-316 carries the N6-methyllysine; alternate modification. An N6-methyllysine modification is found at Lys-390.

The protein belongs to the TRAFAC class translation factor GTPase superfamily. Classic translation factor GTPase family. EF-Tu/EF-1A subfamily.

The protein resides in the cytoplasm. In terms of biological role, this protein promotes the GTP-dependent binding of aminoacyl-tRNA to the A-site of ribosomes during protein biosynthesis. In Eremothecium gossypii (strain ATCC 10895 / CBS 109.51 / FGSC 9923 / NRRL Y-1056) (Yeast), this protein is Elongation factor 1-alpha (TEF).